Consider the following 1487-residue polypeptide: Collagen alpha-1(II) chain (1487 aa).

A signal peptide spans 1-25 (MIRLGAPQTLVLLTLLVAAVLRCQG). Positions 26–181 (QDVQEAGSCV…PPGLGGNFAA (156 aa)) are cleaved as a propeptide — N-terminal propeptide. The 59-residue stretch at 32 to 90 (GSCVQDGQRYNDKDVWKPEPCRICVCDTGTVLCDDIICEDVKDCLSPEIPFGECCPICP) folds into the VWFC domain. Residues 97–1237 (SGQPGPKGQK…PREKGPDPLQ (1141 aa)) form a disordered region. 2 stretches are compositionally biased toward basic and acidic residues: residues 105-116 (QKGEPGDIKDIV) and 133-154 (PRGDRGDKGEKGAPGPRGRDGE). Positions 158 to 173 (PGNPGPPGPPGPPGPP) are enriched in pro residues. Residue K190 is modified to 5-hydroxylysine. K190 is a glycosylation site (O-linked (Gal...) hydroxylysine). Residues 201–1214 (GPMGPMGPRG…PGPPGPPGPP (1014 aa)) are triple-helical region. The segment covering 208–217 (PRGPPGPAGA) has biased composition (pro residues). The segment covering 218-239 (PGPQGFQGNPGEPGEPGVSGPM) has biased composition (low complexity). Residues 241–250 (PRGPPGPPGK) show a composition bias toward pro residues. Basic and acidic residues predominate over residues 251–265 (PGDDGEAGKPGKAGE). Residues K287, K299, and K308 each carry the 5-hydroxylysine modification. O-linked (Gal...) hydroxylysine glycosylation is found at K287, K299, and K308. 2 stretches are compositionally biased toward low complexity: residues 310 to 320 (ESGSPGENGSP) and 335 to 350 (TGPAGAAGARGNDGQP). Gly residues predominate over residues 360-369 (GPAGGPGFPG). Composition is skewed to low complexity over residues 370–382 (APGAKGEAGPTGA) and 391–431 (PRGE…AGAP). 5-hydroxylysine is present on K374. K374 is a glycosylation site (O-linked (Gal...) hydroxylysine). The segment covering 433 to 442 (FPGPRGPPGP) has biased composition (pro residues). 5-hydroxylysine occurs at positions 608 and 620. K608 and K620 each carry an O-linked (Gal...) hydroxylysine glycan. 2 stretches are compositionally biased toward low complexity: residues 622-631 (LPGAPGLRGL) and 656-667 (QGAPGPSGFQGL). 4-hydroxyproline is present on residues P659 and P668. P670 is subject to 3-hydroxyproline. P671 and P674 each carry 4-hydroxyproline. Over residues 764–775 (KGDRGDVGEKGP) the composition is skewed to basic and acidic residues. Composition is skewed to low complexity over residues 833–848 (AGFAGPPGADGQPGAK) and 877–913 (PTGVTGPKGARGAQGPPGATGFPGAAGRVGPPGSNGN). 3-hydroxyproline is present on P907. 3 positions are modified to 4-hydroxyproline: P908, P914, and P920. Pro residues predominate over residues 1069–1079 (APGPPGSPGPA). Over residues 1115-1129 (RGDKGEAGEPGERGL) the composition is skewed to basic and acidic residues. Residue K1130 is modified to 5-hydroxylysine. An O-linked (Gal...) hydroxylysine glycan is attached at K1130. P1144 bears the 3-hydroxyproline mark. Over residues 1148-1157 (SGDQGASGPA) the composition is skewed to low complexity. P1181 carries the 4-hydroxyproline modification. P1186 bears the 3-hydroxyproline mark. At P1187 the chain carries 4-hydroxyproline. Residues 1199 to 1216 (AGPPGNPGPPGPPGPPGP) show a composition bias toward pro residues. Position 1201 is a 3-hydroxyproline (P1201). 4-hydroxyproline occurs at positions 1202 and 1205. At P1207 the chain carries 3-hydroxyproline. 4-hydroxyproline occurs at positions 1208 and 1211. P1213 carries the post-translational modification 3-hydroxyproline. At P1214 the chain carries 4-hydroxyproline. The segment at 1215 to 1241 (GPGIDMSAFAGLGPREKGPDPLQYMRA) is nonhelical region (C-terminal). The 235-residue stretch at 1253-1487 (AEVDATLKSL…GVDIGPVCFL (235 aa)) folds into the Fibrillar collagen NC1 domain. Disulfide bonds link C1283-C1315, C1323-C1485, and C1393-C1438. Ca(2+) contacts are provided by D1301, N1303, Q1304, C1306, and D1309. An N-linked (GlcNAc...) asparagine glycan is attached at N1388.

The protein belongs to the fibrillar collagen family. As to quaternary structure, homotrimers of alpha 1(II) chains. The N-telopeptide is covalently linked to the helical COL2 region of alpha 1(IX), alpha 2(IX) and alpha 3(IX) chain. The C-telopeptide is covalently linked to an another site in the helical region of alpha 3(IX) COL2. In terms of processing, contains mostly 4-hydroxyproline. Prolines at the third position of the tripeptide repeating unit (G-X-P) are 4-hydroxylated in some or all of the chains. Post-translationally, contains 3-hydroxyproline at a few sites. This modification occurs on the first proline residue in the sequence motif Gly-Pro-Hyp, where Hyp is 4-hydroxyproline. Lysine residues at the third position of the tripeptide repeating unit (G-X-Y) are 5-hydroxylated in some or all of the chains. In terms of processing, O-glycosylated on hydroxylated lysine residues. The O-linked glycan consists of a Glc-Gal disaccharide. As to expression, isoform 2 is highly expressed in juvenile chondrocyte and low in fetal chondrocyte.

It is found in the secreted. It localises to the extracellular space. Its subcellular location is the extracellular matrix. In terms of biological role, type II collagen is specific for cartilaginous tissues. It is essential for the normal embryonic development of the skeleton, for linear growth and for the ability of cartilage to resist compressive forces. The protein is Collagen alpha-1(II) chain of Homo sapiens (Human).